A 304-amino-acid chain; its full sequence is ADP-polyphosphate phosphotransferase (304 aa).

Belongs to the polyphosphate kinase 2 (PPK2) family. Class I subfamily.

The catalysed reaction is [phosphate](n) + ATP = [phosphate](n+1) + ADP. Its function is as follows. Uses inorganic polyphosphate (polyP) as a donor to convert ADP to ATP. The protein is ADP-polyphosphate phosphotransferase of Pseudomonas aeruginosa (strain ATCC 15692 / DSM 22644 / CIP 104116 / JCM 14847 / LMG 12228 / 1C / PRS 101 / PAO1).